The following is a 227-amino-acid chain: Cytochrome c oxidase subunit 2 (227 aa).

The Mitochondrial intermembrane segment spans residues Met1–Ser14. The chain crosses the membrane as a helical span at residues Pro15–Met45. The Mitochondrial matrix portion of the chain corresponds to Leu46–Gln59. The chain crosses the membrane as a helical span at residues Glu60–Met87. Topologically, residues Asp88–Val227 are mitochondrial intermembrane. Cu cation contacts are provided by His161, Cys196, Glu198, Cys200, His204, and Met207. Position 198 (Glu198) interacts with Mg(2+). The residue at position 218 (Tyr218) is a Phosphotyrosine.

This sequence belongs to the cytochrome c oxidase subunit 2 family. In terms of assembly, component of the cytochrome c oxidase (complex IV, CIV), a multisubunit enzyme composed of 14 subunits. The complex is composed of a catalytic core of 3 subunits MT-CO1, MT-CO2 and MT-CO3, encoded in the mitochondrial DNA, and 11 supernumerary subunits COX4I, COX5A, COX5B, COX6A, COX6B, COX6C, COX7A, COX7B, COX7C, COX8 and NDUFA4, which are encoded in the nuclear genome. The complex exists as a monomer or a dimer and forms supercomplexes (SCs) in the inner mitochondrial membrane with NADH-ubiquinone oxidoreductase (complex I, CI) and ubiquinol-cytochrome c oxidoreductase (cytochrome b-c1 complex, complex III, CIII), resulting in different assemblies (supercomplex SCI(1)III(2)IV(1) and megacomplex MCI(2)III(2)IV(2)). Found in a complex with TMEM177, COA6, COX18, COX20, SCO1 and SCO2. Interacts with TMEM177 in a COX20-dependent manner. Interacts with COX20. Interacts with COX16. Requires Cu cation as cofactor.

The protein resides in the mitochondrion inner membrane. The catalysed reaction is 4 Fe(II)-[cytochrome c] + O2 + 8 H(+)(in) = 4 Fe(III)-[cytochrome c] + 2 H2O + 4 H(+)(out). Its function is as follows. Component of the cytochrome c oxidase, the last enzyme in the mitochondrial electron transport chain which drives oxidative phosphorylation. The respiratory chain contains 3 multisubunit complexes succinate dehydrogenase (complex II, CII), ubiquinol-cytochrome c oxidoreductase (cytochrome b-c1 complex, complex III, CIII) and cytochrome c oxidase (complex IV, CIV), that cooperate to transfer electrons derived from NADH and succinate to molecular oxygen, creating an electrochemical gradient over the inner membrane that drives transmembrane transport and the ATP synthase. Cytochrome c oxidase is the component of the respiratory chain that catalyzes the reduction of oxygen to water. Electrons originating from reduced cytochrome c in the intermembrane space (IMS) are transferred via the dinuclear copper A center (CU(A)) of subunit 2 and heme A of subunit 1 to the active site in subunit 1, a binuclear center (BNC) formed by heme A3 and copper B (CU(B)). The BNC reduces molecular oxygen to 2 water molecules using 4 electrons from cytochrome c in the IMS and 4 protons from the mitochondrial matrix. This is Cytochrome c oxidase subunit 2 (MT-CO2) from Lycalopex sechurae (Sechuran desert fox).